Consider the following 511-residue polypeptide: Bifunctional purine biosynthesis protein PurH (511 aa).

One can recognise an MGS-like domain in the interval 1–145 (MKRRALVSVS…KNHQHVTVVV (145 aa)).

Belongs to the PurH family.

The catalysed reaction is (6R)-10-formyltetrahydrofolate + 5-amino-1-(5-phospho-beta-D-ribosyl)imidazole-4-carboxamide = 5-formamido-1-(5-phospho-D-ribosyl)imidazole-4-carboxamide + (6S)-5,6,7,8-tetrahydrofolate. It carries out the reaction IMP + H2O = 5-formamido-1-(5-phospho-D-ribosyl)imidazole-4-carboxamide. It participates in purine metabolism; IMP biosynthesis via de novo pathway; 5-formamido-1-(5-phospho-D-ribosyl)imidazole-4-carboxamide from 5-amino-1-(5-phospho-D-ribosyl)imidazole-4-carboxamide (10-formyl THF route): step 1/1. The protein operates within purine metabolism; IMP biosynthesis via de novo pathway; IMP from 5-formamido-1-(5-phospho-D-ribosyl)imidazole-4-carboxamide: step 1/1. The sequence is that of Bifunctional purine biosynthesis protein PurH from Halalkalibacterium halodurans (strain ATCC BAA-125 / DSM 18197 / FERM 7344 / JCM 9153 / C-125) (Bacillus halodurans).